Here is a 593-residue protein sequence, read N- to C-terminus: Aspartate--tRNA ligase (593 aa).

E180 lines the L-aspartate pocket. The aspartate stretch occupies residues Q204–K207. An L-aspartate-binding site is contributed by R226. Residues R226–E228 and Q235 contribute to the ATP site. L-aspartate is bound at residue H454. ATP is bound at residue E488. Residue R495 coordinates L-aspartate. Residue G540–R543 participates in ATP binding.

The protein belongs to the class-II aminoacyl-tRNA synthetase family. Type 1 subfamily. In terms of assembly, homodimer.

The protein resides in the cytoplasm. It carries out the reaction tRNA(Asp) + L-aspartate + ATP = L-aspartyl-tRNA(Asp) + AMP + diphosphate. In terms of biological role, catalyzes the attachment of L-aspartate to tRNA(Asp) in a two-step reaction: L-aspartate is first activated by ATP to form Asp-AMP and then transferred to the acceptor end of tRNA(Asp). The sequence is that of Aspartate--tRNA ligase from Clostridium novyi (strain NT).